We begin with the raw amino-acid sequence, 360 residues long: Phospho-N-acetylmuramoyl-pentapeptide-transferase (360 aa).

Transmembrane regions (helical) follow at residues 25-45 (RGILGVLTALTLSLCLGPWMI), 73-93 (TMGGALILSSIGISTLLWADL), 97-117 (YVWVVLLVTFLFGAIGWVDDY), 135-155 (FWQSVFGLCAAIFLYTTAPSA), 170-190 (IPLGIGFIVLTYFVIVGSSNA), 199-219 (GLAIMPTVMVGGALGIFCYLS), 236-256 (AGELIVFSGALIGAGLGFLWF), 263-283 (VFMGDVGALALGAALGTMAVI), 288-308 (MVLFIMGGVFVMETLSVVIQV), and 338-358 (VIVRFWIITVILVLIGLATLK).

Belongs to the glycosyltransferase 4 family. MraY subfamily. Mg(2+) serves as cofactor.

It is found in the cell inner membrane. It catalyses the reaction UDP-N-acetyl-alpha-D-muramoyl-L-alanyl-gamma-D-glutamyl-meso-2,6-diaminopimeloyl-D-alanyl-D-alanine + di-trans,octa-cis-undecaprenyl phosphate = di-trans,octa-cis-undecaprenyl diphospho-N-acetyl-alpha-D-muramoyl-L-alanyl-D-glutamyl-meso-2,6-diaminopimeloyl-D-alanyl-D-alanine + UMP. Its pathway is cell wall biogenesis; peptidoglycan biosynthesis. Catalyzes the initial step of the lipid cycle reactions in the biosynthesis of the cell wall peptidoglycan: transfers peptidoglycan precursor phospho-MurNAc-pentapeptide from UDP-MurNAc-pentapeptide onto the lipid carrier undecaprenyl phosphate, yielding undecaprenyl-pyrophosphoryl-MurNAc-pentapeptide, known as lipid I. The polypeptide is Phospho-N-acetylmuramoyl-pentapeptide-transferase (Pseudomonas syringae pv. syringae (strain B728a)).